A 444-amino-acid polypeptide reads, in one-letter code: Chromosome partition protein MukF (444 aa).

The tract at residues 212 to 240 is leucine-zipper; the sequence is LDETSGNLRELQDTLNAAGDKLQAQLLRI.

It belongs to the MukF family. As to quaternary structure, interacts, and probably forms a ternary complex, with MukE and MukB via its C-terminal region. The complex formation is stimulated by calcium or magnesium. It is required for an interaction between MukE and MukB.

It localises to the cytoplasm. It is found in the nucleoid. Functionally, involved in chromosome condensation, segregation and cell cycle progression. May participate in facilitating chromosome segregation by condensation DNA from both sides of a centrally located replisome during cell division. Not required for mini-F plasmid partitioning. Probably acts via its interaction with MukB and MukE. Overexpression results in anucleate cells. It has a calcium binding activity. The chain is Chromosome partition protein MukF from Haemophilus influenzae (strain PittEE).